We begin with the raw amino-acid sequence, 140 residues long: Hexon-interlacing protein (140 aa).

Residues 100-127 are a coiled coil; sequence LTALLAQLDSLTRELNVVSQQLLDLRQQ. S135 carries the phosphoserine; by host modification.

The protein belongs to the adenoviridae hexon-interlacing protein family. As to quaternary structure, homotrimer. Interacts with hexon protein; this interaction tethers the hexons together. Self-interacts with adjacent proteins. Interacts with kinesin light chain KLC1; this interaction leads to capsid disruption at the nuclear pore complex during virus entry into host cell.

The protein localises to the virion. It localises to the host nucleus. In terms of biological role, structural component of the virion that forms triskelion structures consisting of three molecules that stabilize three hexon trimers at the center of each icosahedral facet and fixes the peripentonal hexons. Dispensable for assembly. During virus entry, recruits the anterograde motor kinesin-1 to the capsid docked at the nuclear pore complex thereby subjecting the docked capsid to a pulling force. The resulting tension leads to capsid disruption, dispersion of capsid fragments toward cell periphery and eventually viral DNA entry into the host nucleus. This Human adenovirus C serotype 2 (HAdV-2) protein is Hexon-interlacing protein.